Here is a 325-residue protein sequence, read N- to C-terminus: Melanocortin receptor 5 (325 aa).

At 1–37 (MNSSFHLHFLDLNLNATEGNLSGPNVKNKSSPCEDMG) the chain is on the extracellular side. N-linked (GlcNAc...) asparagine glycosylation is found at Asn-2, Asn-15, Asn-20, and Asn-28. Residues 38 to 61 (IAVEVFLTLGVISLLENILVIGAI) traverse the membrane as a helical segment. The Cytoplasmic segment spans residues 62-73 (VKNKNLHSPMYF). Residues 74–97 (FVCSLAVADMLVSMSSAWETITIY) form a helical membrane-spanning segment. Topologically, residues 98 to 114 (LLNNKHLVIADAFVRHI) are extracellular. The chain crosses the membrane as a helical span at residues 115 to 138 (DNVFDSMICISVVASMCSLLAIAV). Residues 139–155 (DRYVTIFYALRYHHIMT) lie on the Cytoplasmic side of the membrane. Residues 156-179 (ARRSGAIIAGIWAFCTGCGIVFIL) form a helical membrane-spanning segment. The Extracellular portion of the chain corresponds to 180–186 (YSESTYV). The chain crosses the membrane as a helical span at residues 187–211 (ILCLISMFFAMLFLLVSLYIHMFLL). Topologically, residues 212-239 (ARTHVKRIAALPRASSARQRTSMQGAVT) are cytoplasmic. Residues 240–265 (VTMLLGVFTVCWAPFFLHLTLMLSCP) traverse the membrane as a helical segment. Over 266 to 273 (QNLYCSCF) the chain is Extracellular. A helical transmembrane segment spans residues 274-297 (MSHFNMYLILIMCNSVMDPLIYAF). The Cytoplasmic portion of the chain corresponds to 298–325 (RSQEMRKTFKEIICCRGFRIACSFPRRD). S-palmitoyl cysteine attachment occurs at residues Cys-311 and Cys-312.

The protein belongs to the G-protein coupled receptor 1 family.

The protein resides in the cell membrane. Its function is as follows. Receptor for MSH (alpha, beta and gamma) and ACTH. The activity of this receptor is mediated by G proteins which activate adenylate cyclase. This receptor is a possible mediator of the immunomodulation properties of melanocortins. The chain is Melanocortin receptor 5 (MC5R) from Pan troglodytes (Chimpanzee).